Consider the following 537-residue polypeptide: uncharacterized protein (537 aa).

This is an uncharacterized protein from Methanocaldococcus jannaschii (strain ATCC 43067 / DSM 2661 / JAL-1 / JCM 10045 / NBRC 100440) (Methanococcus jannaschii).